The chain runs to 359 residues: tRNA N6-adenosine threonylcarbamoyltransferase (359 aa).

Residues His-115 and His-119 each coordinate Fe cation. Substrate-binding positions include 137–141, Asp-170, Gly-183, and Asn-283; that span reads LVSGG. Asp-311 is a binding site for Fe cation. Positions 328–359 are disordered; that stretch reads APDSLDIAPRSRWPLDEKSAPVFGTGRRGAKA.

Belongs to the KAE1 / TsaD family. The cofactor is Fe(2+).

The protein resides in the cytoplasm. The catalysed reaction is L-threonylcarbamoyladenylate + adenosine(37) in tRNA = N(6)-L-threonylcarbamoyladenosine(37) in tRNA + AMP + H(+). In terms of biological role, required for the formation of a threonylcarbamoyl group on adenosine at position 37 (t(6)A37) in tRNAs that read codons beginning with adenine. Is involved in the transfer of the threonylcarbamoyl moiety of threonylcarbamoyl-AMP (TC-AMP) to the N6 group of A37, together with TsaE and TsaB. TsaD likely plays a direct catalytic role in this reaction. This is tRNA N6-adenosine threonylcarbamoyltransferase from Brucella suis (strain ATCC 23445 / NCTC 10510).